A 1402-amino-acid polypeptide reads, in one-letter code: Phospholipid-transporting ATPase dnf2 (1402 aa).

The next 4 membrane-spanning stretches (helical) occupy residues 109 to 129, 135 to 155, 457 to 477, and 501 to 521; these read FQNVANLFFLFLVILQSISIF, PGLAAVPLIVVVGITAVKDAI, LNFIILFSMCFVCAVVEGIAW, and VVTFFTGVILFQNLVPISLYI. Aspartate 569 (4-aspartylphosphate intermediate) is an active-site residue. Positions 569, 570, 571, 700, 741, 743, 746, 764, 799, 800, 879, 880, 881, 986, and 992 each coordinate ATP. Mg(2+) is bound at residue aspartate 569. Threonine 571 contacts Mg(2+). Aspartate 1012 is a binding site for Mg(2+). Residues asparagine 1015 and aspartate 1016 each contribute to the ATP site. Aspartate 1016 lines the Mg(2+) pocket. The next 6 membrane-spanning stretches (helical) occupy residues 1066–1086, 1101–1121, 1151–1171, 1193–1213, 1218–1238, and 1260–1280; these read VAEMVNNFFYKSVVWTFTLFW, YTYVMLFNLIFSSLPVIVMGV, IFIGYMLDGFYQSVICFFFSF, LGVYVAAPTIMVVDTYVILNQ, VFSIGLWALSCLTFWFWTGVY, and FWAVLCGTIVSCLFPKFLFMT. Lysine 1275 is a binding site for a 1,2-diacyl-sn-glycero-3-phospho-L-serine.

This sequence belongs to the cation transport ATPase (P-type) (TC 3.A.3) family. Type IV subfamily. It depends on Mg(2+) as a cofactor.

The protein localises to the cell membrane. It is found in the endoplasmic reticulum membrane. The catalysed reaction is ATP + H2O + phospholipidSide 1 = ADP + phosphate + phospholipidSide 2.. It catalyses the reaction a 1,2-diacyl-sn-glycero-3-phosphoethanolamine(out) + ATP + H2O = a 1,2-diacyl-sn-glycero-3-phosphoethanolamine(in) + ADP + phosphate + H(+). The enzyme catalyses a 1,2-diacyl-sn-glycero-3-phosphocholine(out) + ATP + H2O = a 1,2-diacyl-sn-glycero-3-phosphocholine(in) + ADP + phosphate + H(+). It carries out the reaction a beta-D-glucosyl-(1&lt;-&gt;1')-N-acylsphing-4-enine(out) + ATP + H2O = a beta-D-glucosyl-(1&lt;-&gt;1')-N-acylsphing-4-enine(in) + ADP + phosphate + H(+). The catalysed reaction is a 1,2-diacyl-sn-glycero-3-phospho-L-serine(out) + ATP + H2O = a 1,2-diacyl-sn-glycero-3-phospho-L-serine(in) + ADP + phosphate + H(+). In terms of biological role, catalytic component of a P4-ATPase flippase complex which catalyzes the hydrolysis of ATP coupled to the transport of glucosylceramide, phosphatidylcholine, phosphatidylethanolamine, and small amounts of phosphatidylserine from the lumenal to the cytosolic leaflet of the cell membrane and ensures the maintenance of asymmetric distribution of phospholipids. This is Phospholipid-transporting ATPase dnf2 from Schizosaccharomyces pombe (strain 972 / ATCC 24843) (Fission yeast).